Consider the following 316-residue polypeptide: BTB/POZ domain-containing adapter for CUL3-mediated RhoA degradation protein 2 (316 aa).

The BTB domain occupies 28-96 (KYVQLNVGGS…LRDDTITLPQ (69 aa)). Positions 268–279 (EATSRSRSQASP) are enriched in polar residues. Residues 268–288 (EATSRSRSQASPSEDEDTFEL) are disordered. Ser278 is modified (phosphoserine). Ser280 carries the phosphoserine; by CK2 modification.

The protein belongs to the BACURD family. In terms of assembly, component of the BCR(TNFAIP1) E3 ubiquitin ligase complex, at least composed of CUL3, TNFAIP1/BACURD2 and RBX1. Interacts with RHOA; with a preference for RhoA-GDP. Interacts with RHOB. Interacts with PCNA. Interacts with CSNK2B. In terms of processing, phosphorylation at Ser-280 by CK2 facilitates the nucleus localization and increases interaction with PCNA.

It localises to the cytoplasm. The protein resides in the nucleus. The protein localises to the endosome. It functions in the pathway protein modification; protein ubiquitination. Its function is as follows. Substrate-specific adapter of a BCR (BTB-CUL3-RBX1) E3 ubiquitin-protein ligase complex involved in regulation of cytoskeleton structure. The BCR(TNFAIP1) E3 ubiquitin ligase complex mediates the ubiquitination of RHOA, leading to its degradation by the proteasome, thereby regulating the actin cytoskeleton and cell migration. Its interaction with RHOB may regulate apoptosis. May enhance the PCNA-dependent DNA polymerase delta activity. In Mus musculus (Mouse), this protein is BTB/POZ domain-containing adapter for CUL3-mediated RhoA degradation protein 2 (Tnfaip1).